Consider the following 183-residue polypeptide: Ferritin light chain 1 (183 aa).

Residues 7-156 (QNYSTEVEAA…NHLTNLRRVA (150 aa)) form the Ferritin-like diiron domain. Residues Glu54, Glu57, Glu58, Glu61, and Glu64 each coordinate Fe cation.

Belongs to the ferritin family. In terms of assembly, oligomer of 24 subunits. There are two types of subunits: L (light) chain and H (heavy) chain. The major chain can be light or heavy, depending on the species and tissue type. The functional molecule forms a roughly spherical shell with a diameter of 12 nm and contains a central cavity into which the insoluble mineral iron core is deposited. Interacts with NCOA4.

The protein resides in the cytoplasm. It is found in the cytoplasmic vesicle. The protein localises to the autophagosome. It localises to the autolysosome. Its function is as follows. Stores iron in a soluble, non-toxic, readily available form. Important for iron homeostasis. Iron is taken up in the ferrous form and deposited as ferric hydroxides after oxidation. Also plays a role in delivery of iron to cells. Mediates iron uptake in capsule cells of the developing kidney. Degraded to release iron upon autophagy activation by nutrient starvation. The chain is Ferritin light chain 1 (Ftl1) from Mus musculus (Mouse).